We begin with the raw amino-acid sequence, 471 residues long: FAD-dependent monooxygenase andE (471 aa).

Residues glutamate 35, glycine 49, and arginine 108 each coordinate FAD. Tyrosine 216 is an active-site residue. Positions 308 and 321 each coordinate FAD. The next 2 helical transmembrane spans lie at 403-423 (LANI…LPFP) and 443-463 (TPFA…LLGL).

It belongs to the paxM FAD-dependent monooxygenase family. It depends on FAD as a cofactor.

The protein localises to the membrane. It functions in the pathway secondary metabolite biosynthesis; terpenoid biosynthesis. In terms of biological role, FAD-dependent monooxygenase; part of the gene cluster that mediates the biosynthesis of anditomin, a fungal meroterpenoid. The first step of the pathway is the synthesis of 3,5-dimethylorsellinic acid (DMOA) by the polyketide synthase andM. DMOA is then converted to the phthalide compound 5,7-dihydroxy-4,6-dimethylphthalide (DHDMP) by the cytochrome P450 monooxygenase andK, which is further prenylated by the prenyltransferase andD to yield farnesyl-DHDMP. Further epoxidation by the FAD-dependent monooxygenase andE leads to epoxyfarnesyl-DHDMP. The next step involves the terpene cyclase andB that converts epoxyfarnesyl-DHDMP into preandiloid A through opening of the epoxide ring followed by the cyclization of the farnesyl moiety. Preandiloid A is in turn oxidized at the C-3 hydroxyl group to yield preandiloid B by the dehydrogenase andC. The dioxygenase andA is solely responsible for the dehydrogenation of preandiloid B leading to the enone preandiloid C, as well as for the intriguing structural rearrangement to generate the bicyclo[2.2.2]octane core, transforming preandiloid C into andiconin. FAD-binding monooxygenase andJ then produces andilesin D which is reduced by dehydrogenase andI to yield andilesin A. Action of acetyltransferase andG followed by a spontaneous acetate elimination leads then to andilesin B, which is in turn substrate of the short chain dehydrogenase andH to yield andilesin C. Finally, the dioxygenase andF catalyzes the transformation of andilesin C to anditomin. The sequence is that of FAD-dependent monooxygenase andE from Emericella variicolor (Aspergillus stellatus).